A 206-amino-acid polypeptide reads, in one-letter code: Probable glutathione S-transferase 6 (206 aa).

The region spanning 2 to 79 (VHYKLVYFPL…YLAREFGIAG (78 aa)) is the GST N-terminal domain. Glutathione is bound by residues Tyr-8, Trp-39, Lys-43, 49–51 (GQL), and 63–64 (QS). The GST C-terminal domain maps to 81–206 (NDTEAAEVDA…YIANRPDYPF (126 aa)).

Belongs to the GST superfamily. Sigma family.

The catalysed reaction is RX + glutathione = an S-substituted glutathione + a halide anion + H(+). Its function is as follows. Conjugation of reduced glutathione to a wide number of exogenous and endogenous hydrophobic electrophiles. The sequence is that of Probable glutathione S-transferase 6 (gst-6) from Caenorhabditis elegans.